Here is a 103-residue protein sequence, read N- to C-terminus: AAFALPAFASFEKDVITPSVLEAVLNRKAPLSNIMMENDAILNVIANVKTVISNPVLEEALLKTNHGVNGIPCGESCVWIPCLTSAVGCPCKSKVCYRNSLDN.

The first 9 residues, 1-9, serve as a signal peptide directing secretion; it reads AAFALPAFA. Residues 10-69 constitute a propeptide that is removed on maturation; sequence SFEKDVITPSVLEAVLNRKAPLSNIMMENDAILNVIANVKTVISNPVLEEALLKTNHGVN. Residues 70–99 constitute a cross-link (cyclopeptide (Gly-Asn)); it reads GIPCGESCVWIPCLTSAVGCPCKSKVCYRN. Cystine bridges form between Cys-73–Cys-89, Cys-77–Cys-91, and Cys-82–Cys-96. Positions 100–103 are excised as a propeptide; sequence SLDN.

This is a cyclic peptide.

Functionally, probably participates in a plant defense mechanism. The polypeptide is Cyclotide vibi-K (Viola biflora (Yellow wood violet)).